The chain runs to 887 residues: Translation initiation factor IF-2 (887 aa).

The tract at residues 1–259 is disordered; sequence MSDEQDQGET…KVGDDRRRGA (259 aa). Positions 62 to 94 are enriched in low complexity; that stretch reads GRPSAPSRASGGAAAPRGLTAAEQAARQRAVVE. Basic and acidic residues-rich tracts occupy residues 95-111 and 119-158; these read QQRE…EQEK and EEAR…RRAA. Residues 159–210 are compositionally biased toward low complexity; that stretch reads EASQATAAPPAPAAAASPRAAMPAPTAAPARPGAAPARRTAPVPPATSASET. Basic and acidic residues predominate over residues 250 to 259; sequence KVGDDRRRGA. The tr-type G domain maps to 386–556; sequence VRPPVVTIMG…LLQAELLDLK (171 aa). Residues 395 to 402 are G1; it reads GHVDHGKT. 395–402 contacts GTP; sequence GHVDHGKT. The G2 stretch occupies residues 420-424; the sequence is GITQH. The interval 442 to 445 is G3; it reads DTPG. GTP-binding positions include 442–446 and 496–499; these read DTPGH and NKID. The G4 stretch occupies residues 496 to 499; that stretch reads NKID. Positions 532–534 are G5; that stretch reads SAL.

This sequence belongs to the TRAFAC class translation factor GTPase superfamily. Classic translation factor GTPase family. IF-2 subfamily.

It localises to the cytoplasm. One of the essential components for the initiation of protein synthesis. Protects formylmethionyl-tRNA from spontaneous hydrolysis and promotes its binding to the 30S ribosomal subunits. Also involved in the hydrolysis of GTP during the formation of the 70S ribosomal complex. In Acidiphilium cryptum (strain JF-5), this protein is Translation initiation factor IF-2.